Here is a 178-residue protein sequence, read N- to C-terminus: uncharacterized protein (178 aa).

The segment covering 1–13 (MEVASSSSACQFD) has biased composition (polar residues). Disordered regions lie at residues 1-24 (MEVASSSSACQFDNLNNNNNELKP) and 47-114 (WPSR…KKEK).

This is an uncharacterized protein from Caenorhabditis elegans.